We begin with the raw amino-acid sequence, 604 residues long: Putative O-acetyltransferase SAR0937 (604 aa).

11 consecutive transmembrane segments (helical) span residues 15-35 (YMPG…IYHL), 43-63 (GFLG…SLLL), 85-105 (LLPA…LLKS), 150-170 (AIEE…LLTI), 176-196 (IGFI…FIYS), 212-232 (LQTL…KLKN), 240-260 (YVID…FFII), 267-287 (IYDG…ASVV), 310-330 (YSLY…YVDG), 332-352 (IPVY…ELSY), and 377-397 (FIRM…LVGA). Residues Ser-459, Asp-581, and His-584 contribute to the active site.

Belongs to the acyltransferase 3 family.

Its subcellular location is the cell membrane. This is Putative O-acetyltransferase SAR0937 from Staphylococcus aureus (strain MRSA252).